The sequence spans 288 residues: Nucleotide-binding protein APP7_0339 (288 aa).

Position 8-15 (8-15 (GRSGSGKS)) interacts with ATP. 56–59 (DIRN) contributes to the GTP binding site.

Belongs to the RapZ-like family.

Functionally, displays ATPase and GTPase activities. The chain is Nucleotide-binding protein APP7_0339 from Actinobacillus pleuropneumoniae serotype 7 (strain AP76).